The chain runs to 462 residues: Squalene synthase LSS (462 aa).

2 residues coordinate NADP(+): R48 and R73. D76, E79, and D80 together coordinate Mg(2+). R214, K314, and R316 together coordinate NADP(+). A run of 2 helical transmembrane segments spans residues 399-419 (LVLVLGLGYCVYAFNLLPLLW) and 436-456 (LGLPHQIIAVFCVLTAGYQVF).

It belongs to the phytoene/squalene synthase family. Mg(2+) is required as a cofactor.

It is found in the membrane. It carries out the reaction 2 (2E,6E)-farnesyl diphosphate + NADH + H(+) = squalene + 2 diphosphate + NAD(+). It catalyses the reaction 2 (2E,6E)-farnesyl diphosphate + NADPH + H(+) = squalene + 2 diphosphate + NADP(+). Converts farnesyl diphosphate (FPP) into squalene, a precursor for sterol biosynthesis in eukaryotes. This Botryococcus braunii (Green alga) protein is Squalene synthase LSS.